Consider the following 508-residue polypeptide: N-acetyl-D-hexosamine oxidase (508 aa).

Residues 26 to 203 (TDAQAAGRIA…TAYTFARLPE (178 aa)) form the FAD-binding PCMH-type domain. The segment at residues 64 to 123 (HCYEDFVSNNPDGAIVDLSLLNAPEVRADGTVRIPAGTQNWNGYLELYKRHNLTLPGGSC) is a cross-link (6-(S-cysteinyl)-8alpha-(pros-histidyl)-FAD (His-Cys)).

It belongs to the oxygen-dependent FAD-linked oxidoreductase family. Requires FAD as cofactor.

It carries out the reaction N-acetyl-D-glucosamine + O2 + H2O = N-acetyl-D-glucosaminate + H2O2 + H(+). The catalysed reaction is N-acetyl-D-galactosamine + O2 + H2O = N-acetyl-D-galactosaminate + H2O2 + H(+). The enzyme catalyses N-acetyl-D-glucosamine + O2 = N-acetyl-D-glucosamino-1,5-lactone + H2O2. It catalyses the reaction N-acetyl-D-galactosamine + O2 = N-acetyl-D-galactosamino-1,5-lactone + H2O2. In terms of biological role, catalyzes the oxidation of a range of monosaccharides in vitro, displaying the highest activity with N-acetylglucosamine (GlcNAc) and N-acetylgalactosamine (GalNAc), with a reduction of O2 to H2O2. Acts upon the C1 carbon of the GlcNAc or GalNAc molecule, producing the corresponding lactone, which can spontaneously hydrolyze. Its biological function is unclear, but its main function might be connected to extracellular production of hydrogen peroxide to compete with other organisms through oxidative stress, or support the action of peroxidases and peroxygenases. This chain is N-acetyl-D-hexosamine oxidase, found in Ralstonia solanacearum (strain UW551).